Consider the following 345-residue polypeptide: Dense granule protein 4 (345 aa).

Positions 1–20 (MQGTWFSLFVVVMVSHLACG) are cleaved as a signal peptide. Residues 227-251 (SVSVSTEDSGLTGVKDSSSSESTVT) show a composition bias toward polar residues. Residues 227 to 271 (SVSVSTEDSGLTGVKDSSSSESTVTPADEAASESEEGDKTSRKSK) are disordered. Residues 276–296 (ILTGLGVAATLAAAAAAAKAV) traverse the membrane as a helical segment. Positions 298–345 (GFGGTRTSTAPAEAGKTELDDGYRPPPFNPRPSPYAELLKDLERMRKE) are disordered. A compositionally biased stretch (pro residues) spans 321–330 (RPPPFNPRPS). The segment covering 335–345 (LLKDLERMRKE) has biased composition (basic and acidic residues).

O-glycosylated.

The protein localises to the secreted. It localises to the parasitophorous vacuole lumen. Its subcellular location is the parasitophorous vacuole membrane. It is found in the cytoplasmic vesicle. The protein resides in the secretory vesicle. In terms of biological role, major granular component involved in excreted-secreted antigen (ESA) immunity. The protein is Dense granule protein 4 (GRA4) of Toxoplasma gondii.